A 287-amino-acid chain; its full sequence is ATP synthase gamma chain (287 aa).

The protein belongs to the ATPase gamma chain family. In terms of assembly, F-type ATPases have 2 components, CF(1) - the catalytic core - and CF(0) - the membrane proton channel. CF(1) has five subunits: alpha(3), beta(3), gamma(1), delta(1), epsilon(1). CF(0) has three main subunits: a, b and c.

The protein localises to the cell inner membrane. In terms of biological role, produces ATP from ADP in the presence of a proton gradient across the membrane. The gamma chain is believed to be important in regulating ATPase activity and the flow of protons through the CF(0) complex. The chain is ATP synthase gamma chain from Enterobacter sp. (strain 638).